Reading from the N-terminus, the 494-residue chain is Transcription termination factor MTERF4, chloroplastic (494 aa).

The transit peptide at 1 to 54 directs the protein to the chloroplast; the sequence is MMKSLLFSAHPTSLLLPAPRLRRLLRLRAASSASASAPPRADRRSPGTPSRRPS. Disordered regions lie at residues 32-61 and 457-494; these read SASASAPPRADRRSPGTPSRRPSSSLYARP and VEEMEREDSSDMNASVDEVESEEYEDSDYGDSDDEFVR. Positions 46–56 are enriched in low complexity; sequence PGTPSRRPSSS. Acidic residues-rich tracts occupy residues 457–466 and 473–494; these read VEEMEREDSS and DEVESEEYEDSDYGDSDDEFVR.

Belongs to the mTERF family.

The protein resides in the plastid. The protein localises to the chloroplast stroma. Its function is as follows. Transcription termination factor required for processing and steady-state levels of plastid transcripts. Required for splicing of the chloroplastic group II intron. Required for the accumulation of 16S and 23S ribosomes. In Zea mays (Maize), this protein is Transcription termination factor MTERF4, chloroplastic.